The chain runs to 86 residues: Small ribosomal subunit protein bS16 (86 aa).

It belongs to the bacterial ribosomal protein bS16 family.

The protein is Small ribosomal subunit protein bS16 of Xylella fastidiosa (strain 9a5c).